The sequence spans 131 residues: Peptide methionine sulfoxide reductase MsrB (131 aa).

Residues 8 to 130 (LEEWKQMLDP…NSVCLDLVPR (123 aa)) form the MsrB domain. 4 residues coordinate Zn(2+): Cys47, Cys50, Cys96, and Cys99. Cys119 (nucleophile) is an active-site residue.

This sequence belongs to the MsrB Met sulfoxide reductase family. It depends on Zn(2+) as a cofactor.

The enzyme catalyses L-methionyl-[protein] + [thioredoxin]-disulfide + H2O = L-methionyl-(R)-S-oxide-[protein] + [thioredoxin]-dithiol. The sequence is that of Peptide methionine sulfoxide reductase MsrB from Pseudomonas syringae pv. syringae (strain B728a).